Reading from the N-terminus, the 973-residue chain is Leucine--tRNA ligase, chloroplastic/mitochondrial (973 aa).

The 'HIGH' region motif lies at 126-135; the sequence is PSGAGLHVGH. The short motif at 730–734 is the 'KMSKS' region element; it reads KMSKS. Residue Lys-733 participates in ATP binding.

This sequence belongs to the class-I aminoacyl-tRNA synthetase family.

The protein localises to the plastid. It is found in the chloroplast. It localises to the mitochondrion. It catalyses the reaction tRNA(Leu) + L-leucine + ATP = L-leucyl-tRNA(Leu) + AMP + diphosphate. Functionally, catalyzes the specific attachment of an amino acid to its cognate tRNA in a two step reaction: the amino acid (AA) is first activated by ATP to form AA-AMP and then transferred to the acceptor end of the tRNA. The chain is Leucine--tRNA ligase, chloroplastic/mitochondrial from Arabidopsis thaliana (Mouse-ear cress).